The chain runs to 136 residues: Phosphoribosyl-AMP cyclohydrolase (136 aa).

Mg(2+) is bound at residue Asp-89. Cys-90 contacts Zn(2+). Residues Asp-91 and Asp-93 each coordinate Mg(2+). Zn(2+)-binding residues include Cys-106 and Cys-113.

The protein belongs to the PRA-CH family. As to quaternary structure, homodimer. The cofactor is Mg(2+). It depends on Zn(2+) as a cofactor.

It is found in the cytoplasm. The enzyme catalyses 1-(5-phospho-beta-D-ribosyl)-5'-AMP + H2O = 1-(5-phospho-beta-D-ribosyl)-5-[(5-phospho-beta-D-ribosylamino)methylideneamino]imidazole-4-carboxamide. Its pathway is amino-acid biosynthesis; L-histidine biosynthesis; L-histidine from 5-phospho-alpha-D-ribose 1-diphosphate: step 3/9. Catalyzes the hydrolysis of the adenine ring of phosphoribosyl-AMP. The protein is Phosphoribosyl-AMP cyclohydrolase of Bifidobacterium longum subsp. infantis (strain ATCC 15697 / DSM 20088 / JCM 1222 / NCTC 11817 / S12).